Here is a 137-residue protein sequence, read N- to C-terminus: Large ribosomal subunit protein uL16 (137 aa).

This sequence belongs to the universal ribosomal protein uL16 family. In terms of assembly, part of the 50S ribosomal subunit.

Functionally, binds 23S rRNA and is also seen to make contacts with the A and possibly P site tRNAs. The sequence is that of Large ribosomal subunit protein uL16 from Endomicrobium trichonymphae.